A 218-amino-acid chain; its full sequence is Adenylate kinase (218 aa).

ATP is bound at residue Gly10 to Thr15. Positions Ser30–Val59 are NMP. AMP contacts are provided by residues Thr31, Arg36, Glu57–Val59, and Gln92. The tract at residues Gly122–Asp159 is LID. ATP is bound by residues Arg123 and Thr132–Tyr133. AMP contacts are provided by Arg156 and Arg167. Gln202 serves as a coordination point for ATP.

Belongs to the adenylate kinase family. Monomer.

The protein localises to the cytoplasm. The enzyme catalyses AMP + ATP = 2 ADP. The protein operates within purine metabolism; AMP biosynthesis via salvage pathway; AMP from ADP: step 1/1. Catalyzes the reversible transfer of the terminal phosphate group between ATP and AMP. Plays an important role in cellular energy homeostasis and in adenine nucleotide metabolism. The protein is Adenylate kinase of Francisella tularensis subsp. tularensis (strain FSC 198).